The sequence spans 271 residues: ATP synthase subunit a (271 aa).

Transmembrane regions (helical) follow at residues 40–60, 100–120, 146–166, 220–240, and 242–262; these read TINI…LVLF, LIAP…LMDL, DVNV…FYSI, LIFI…LNVP, and AIFH…LTIV.

Belongs to the ATPase A chain family. In terms of assembly, F-type ATPases have 2 components, CF(1) - the catalytic core - and CF(0) - the membrane proton channel. CF(1) has five subunits: alpha(3), beta(3), gamma(1), delta(1), epsilon(1). CF(0) has three main subunits: a(1), b(2) and c(9-12). The alpha and beta chains form an alternating ring which encloses part of the gamma chain. CF(1) is attached to CF(0) by a central stalk formed by the gamma and epsilon chains, while a peripheral stalk is formed by the delta and b chains.

It localises to the cell inner membrane. Its function is as follows. Key component of the proton channel; it plays a direct role in the translocation of protons across the membrane. The protein is ATP synthase subunit a of Shigella dysenteriae serotype 1 (strain Sd197).